Reading from the N-terminus, the 55-residue chain is Large ribosomal subunit protein bL33 (55 aa).

Belongs to the bacterial ribosomal protein bL33 family. Part of the 50S ribosomal subunit. Contacts protein L35.

Its function is as follows. Binds the 23S rRNA and the E site tRNA. The sequence is that of Large ribosomal subunit protein bL33 (rpmG) from Deinococcus radiodurans (strain ATCC 13939 / DSM 20539 / JCM 16871 / CCUG 27074 / LMG 4051 / NBRC 15346 / NCIMB 9279 / VKM B-1422 / R1).